The primary structure comprises 240 residues: Glutamine amidotransferase-like protein chry6 (240 aa).

Residues 13-205 (NFILDDTGGR…FVASDNPVLV (193 aa)) form the Glutamine amidotransferase type-1 domain. Cysteine 102 serves as the catalytic Nucleophile. Active-site residues include histidine 185 and glutamate 187.

This sequence belongs to the peptidase C26 family.

Its pathway is pigment biosynthesis. In terms of biological role, glutamine amidotransferase-like protein; part of the gene cluster that mediates the biosynthesis of the yellow pigment chrysogine. Pyruvic acid and anthranilic acid are likely substrates for the nonribosomal peptide synthetase chry1/NRPS14, with pyruvic acid adenylated by the first A domain and anthranilic acid by the second. If pyruvic acid and anthranilic acid are merged and released from chry1/NRPS14 by hydrolysis, a subsequent amidation would lead to 2-pyruvoylaminobenzamide. This process is probably catalyzed by the amidotransferase chry2 using glutamine as amino donor. The dehydrogenase chry5 that has a terminal berberine bridge domain for C-N cyclization could catalyze the cyclization of 2-pyruvoylaminobenzamide to yield acetyl-4(3H)-quinazolidinone. A final reduction of acetyl-4(3H)-quinazolidinone catalyzed by the oxidoreductase chry4 would result in chrysogine. The polypeptide is Glutamine amidotransferase-like protein chry6 (Gibberella zeae (strain ATCC MYA-4620 / CBS 123657 / FGSC 9075 / NRRL 31084 / PH-1) (Wheat head blight fungus)).